The sequence spans 187 residues: Elongation factor P (187 aa).

It belongs to the elongation factor P family.

It is found in the cytoplasm. The protein operates within protein biosynthesis; polypeptide chain elongation. In terms of biological role, involved in peptide bond synthesis. Stimulates efficient translation and peptide-bond synthesis on native or reconstituted 70S ribosomes in vitro. Probably functions indirectly by altering the affinity of the ribosome for aminoacyl-tRNA, thus increasing their reactivity as acceptors for peptidyl transferase. This Desulforapulum autotrophicum (strain ATCC 43914 / DSM 3382 / VKM B-1955 / HRM2) (Desulfobacterium autotrophicum) protein is Elongation factor P.